The following is a 576-amino-acid chain: Peroxisomal targeting signal receptor (576 aa).

Cys-10 is covalently cross-linked (Glycyl cysteine thioester (Cys-Gly) (interchain with G-Cter in ubiquitin)). Positions Ala-11–Ser-33 are amphipathic helix 1 (AH1). Residue Lys-22 forms a Glycyl lysine isopeptide (Lys-Gly) (interchain with G-Cter in ubiquitin) linkage. The tract at residues Arg-58 to Phe-75 is amphipathic helix 2 (AH2). Short sequence motifs (wxxxF/Y motif) lie at residues Trp-100–Phe-104 and Trp-128–Phe-132. Positions Ala-176–Gln-195 are disordered. A WxxxF/Y motif 3 motif is present at residues Trp-196 to Phe-200. An amphipathic helix 4 (AH4) region spans residues Phe-224–Leu-240. The short motif at Trp-249–Phe-253 is the WxxxF/Y motif 4 element. 7 TPR repeats span residues Pro-278 to His-311, Val-312 to Asn-345, Leu-346 to Arg-383, Ala-384 to Asp-421, Ala-422 to Lys-455, Ala-456 to Phe-489, and Val-490 to Glu-523.

It belongs to the peroxisomal targeting signal receptor family. Interacts (via WxxxF/Y and LVxEF motifs) with PEX14; promoting translocation through the PEX13-PEX14 docking complex. Interacts with PEX8. A disulfide bond is created between Cys-10 and Cys-338 or Cys-444. In terms of processing, monoubiquitinated at Cys-10 by PEX2 during PEX5 passage through the retrotranslocation channel: monoubiquitination acts as a signal for PEX5 extraction and is required for proper export from peroxisomes and recycling. When PEX5 recycling is compromised, polyubiquitinated at Lys-22 by PEX10 during its passage through the retrotranslocation channel, leading to its degradation.

It localises to the peroxisome membrane. The protein resides in the cytoplasm. The protein localises to the cytosol. Its subcellular location is the peroxisome matrix. In terms of biological role, receptor that mediates peroxisomal import of proteins containing a C-terminal PTS1-type tripeptide peroxisomal targeting signal (SKL-type). Binds to cargo proteins containing a PTS1 peroxisomal targeting signal in the cytosol, and translocates them into the peroxisome matrix by passing through the peroxisomal docking complex along with cargo proteins. PEX5 receptor is then retrotranslocated into the cytosol, leading to release of bound cargo in the peroxisome matrix, and reset for a subsequent peroxisome import cycle. Required for PEX7 ubiquitination. This Komagataella phaffii (strain GS115 / ATCC 20864) (Yeast) protein is Peroxisomal targeting signal receptor.